The following is a 418-amino-acid chain: Voltage-gated ClC-type chloride channel ClcB (418 aa).

Transmembrane regions (helical) follow at residues 5 to 25 (LLIA…FRHA), 54 to 74 (LLTP…WQKF), 146 to 166 (LWIA…PLAG), 168 to 188 (LFIA…PVII), 222 to 242 (ALII…LTLM), 258 to 278 (WQLA…PAVW), 291 to 311 (APPL…AVLA), 316 to 336 (GAPG…GMLY), 352 to 372 (LLLG…APIM), and 380 to 400 (MTGE…ASVI).

Belongs to the chloride channel (TC 2.A.49) family. ClcB subfamily.

Its subcellular location is the cell inner membrane. Probably acts as an electrical shunt for an outwardly-directed proton pump that is linked to amino acid decarboxylation, as part of the extreme acid resistance (XAR) response. The sequence is that of Voltage-gated ClC-type chloride channel ClcB from Escherichia coli (strain ATCC 8739 / DSM 1576 / NBRC 3972 / NCIMB 8545 / WDCM 00012 / Crooks).